Here is a 147-residue protein sequence, read N- to C-terminus: Small ribosomal subunit protein uS12 (147 aa).

It belongs to the universal ribosomal protein uS12 family. Part of the 30S ribosomal subunit.

In terms of biological role, with S4 and S5 plays an important role in translational accuracy. Located at the interface of the 30S and 50S subunits. The sequence is that of Small ribosomal subunit protein uS12 from Methanococcus maripaludis (strain DSM 14266 / JCM 13030 / NBRC 101832 / S2 / LL).